A 173-amino-acid polypeptide reads, in one-letter code: MSSKKINPMREISIKKLSIHICARESGAKLDRAAKVLEQLTGQKPVTSKARMTIRNFGIRRNEKIAVHVNVSGKKAYELLNTALRVKEYELKESCFSNNGCFGFGIEEHIDLGLKYDPNIGIFGMDFFVILARPGDRVSKRKRCKSRVGNKQRVYAEDAKKWFVENFEGVLVE.

It belongs to the universal ribosomal protein uL5 family. In terms of assembly, component of the large ribosomal subunit.

Its subcellular location is the nucleus. It localises to the cytoplasm. Functionally, component of the ribosome, a large ribonucleoprotein complex responsible for the synthesis of proteins in the cell. The small ribosomal subunit (SSU) binds messenger RNAs (mRNAs) and translates the encoded message by selecting cognate aminoacyl-transfer RNA (tRNA) molecules. The large subunit (LSU) contains the ribosomal catalytic site termed the peptidyl transferase center (PTC), which catalyzes the formation of peptide bonds, thereby polymerizing the amino acids delivered by tRNAs into a polypeptide chain. The nascent polypeptides leave the ribosome through a tunnel in the LSU and interact with protein factors that function in enzymatic processing, targeting, and the membrane insertion of nascent chains at the exit of the ribosomal tunnel. In Encephalitozoon cuniculi (strain GB-M1) (Microsporidian parasite), this protein is Large ribosomal subunit protein uL5 (RPL11).